Consider the following 432-residue polypeptide: 3-phosphoshikimate 1-carboxyvinyltransferase (432 aa).

The 3-phosphoshikimate site is built by K23, S24, and R28. K23 is a binding site for phosphoenolpyruvate. Residues G95 and R123 each coordinate phosphoenolpyruvate. Residues S167, Q169, D317, and K344 each contribute to the 3-phosphoshikimate site. Q169 contributes to the phosphoenolpyruvate binding site. The active-site Proton acceptor is D317. Phosphoenolpyruvate-binding residues include R348 and R390.

This sequence belongs to the EPSP synthase family. As to quaternary structure, monomer.

The protein resides in the cytoplasm. The catalysed reaction is 3-phosphoshikimate + phosphoenolpyruvate = 5-O-(1-carboxyvinyl)-3-phosphoshikimate + phosphate. Its pathway is metabolic intermediate biosynthesis; chorismate biosynthesis; chorismate from D-erythrose 4-phosphate and phosphoenolpyruvate: step 6/7. In terms of biological role, catalyzes the transfer of the enolpyruvyl moiety of phosphoenolpyruvate (PEP) to the 5-hydroxyl of shikimate-3-phosphate (S3P) to produce enolpyruvyl shikimate-3-phosphate and inorganic phosphate. The protein is 3-phosphoshikimate 1-carboxyvinyltransferase of Staphylococcus haemolyticus (strain JCSC1435).